The chain runs to 45 residues: Photosystem II reaction center protein K (45 aa).

Residues 1-8 constitute a propeptide that is removed on maturation; it reads MEAVFLLA. A helical transmembrane segment spans residues 24–44; it reads LPVIPVFFLALAFVWQAAVGF.

The protein belongs to the PsbK family. PSII is composed of 1 copy each of membrane proteins PsbA, PsbB, PsbC, PsbD, PsbE, PsbF, PsbH, PsbI, PsbJ, PsbK, PsbL, PsbM, PsbT, PsbX, PsbY, PsbZ, Psb30/Ycf12, peripheral proteins PsbO, CyanoQ (PsbQ), PsbU, PsbV and a large number of cofactors. It forms dimeric complexes.

The protein resides in the cellular thylakoid membrane. Functionally, one of the components of the core complex of photosystem II (PSII). PSII is a light-driven water:plastoquinone oxidoreductase that uses light energy to abstract electrons from H(2)O, generating O(2) and a proton gradient subsequently used for ATP formation. It consists of a core antenna complex that captures photons, and an electron transfer chain that converts photonic excitation into a charge separation. The polypeptide is Photosystem II reaction center protein K (Crocosphaera subtropica (strain ATCC 51142 / BH68) (Cyanothece sp. (strain ATCC 51142))).